Consider the following 502-residue polypeptide: MMDNDNQFWKRFLIFTILMFLFITAYELFYIYYVKPSQPQKTEKKEVVKKEEFKNVNLPQLMLGTFREKQEYKNTKTVKLGIYSLELSEKGGKILRFIDQKYGFDLISKAERELKIFPLEIFTGNPDLDQKLNFGEYEIKEGKNSVELIHKELKVKKILSYKNGAIHLSVEGLKPPFWVFVGSPPDDEAFYTHVGPVLKINGEVVRLDVDDLKGINEFEGNIEFGGEESRYFFKGAKDYQKHIVYKVKLGDKFVSLSTFLYDGEKTIYLGAKDYARLRELGLVDTLDWGTLKIIVKPLFLFLYWIYEHTGSWVLSILVLTFIVRIFLFPLGYKSVVSMQKLQELAPKMEKIKQKYKDDPVKMQEEMMKLYAETGFNPMAGCLPILLQIPIFFALYKVLIITVDLKVSSFLWIPSLADKDPYYILPVIMGLTMILQQKMTPSPDPKQALVGYITSVAFTLLFINFPAGLVLYWTLNNVFNIIQNYLIKEVLLKDKSKGGSKKK.

Transmembrane regions (helical) follow at residues 12-32, 286-306, 312-332, 382-402, 409-429, and 452-472; these read FLIF…FYIY, LDWG…YWIY, WVLS…PLGY, LPIL…IITV, FLWI…VIMG, and ITSV…VLYW.

It belongs to the OXA1/ALB3/YidC family. Type 1 subfamily. Interacts with the Sec translocase complex via SecD. Specifically interacts with transmembrane segments of nascent integral membrane proteins during membrane integration.

The protein localises to the cell membrane. Functionally, required for the insertion and/or proper folding and/or complex formation of integral membrane proteins into the membrane. Involved in integration of membrane proteins that insert both dependently and independently of the Sec translocase complex, as well as at least some lipoproteins. Aids folding of multispanning membrane proteins. The polypeptide is Membrane protein insertase YidC (Aquifex aeolicus (strain VF5)).